A 2582-amino-acid chain; its full sequence is Chromodomain-helicase-DNA-binding protein 8 (2582 aa).

4 disordered regions span residues 22–111 (DDSF…PVLQ), 136–155 (MGVSATGVSPSNTGGQPSQS), 253–283 (VKGSAPAGNPGAAGPPLKPAVTLTSTPTQGE), and 349–377 (QKIQIVPQPPSSQPQPQPQPPPSAQPLTL). Composition is skewed to polar residues over residues 42-51 (SLDSLDQMNQ), 94-111 (DYTTQPTSQEQPAQPVLQ), and 141-155 (TGVSPSNTGGQPSQS). Residues 255–267 (GSAPAGNPGAAGP) are compositionally biased toward low complexity. Pro residues predominate over residues 355–372 (PQPPSSQPQPQPQPPPSA). Ser-434 bears the Phosphoserine mark. Disordered stretches follow at residues 475 to 585 (RARG…VKRK) and 598 to 617 (DEEEEEVDVTGPIKPEPILP). The span at 495–518 (RPEEEGEKKRRKKSSGERLKEEKP) shows a compositional bias: basic and acidic residues. Residues Ser-555 and Ser-564 each carry the phosphoserine modification. A compositionally biased stretch (basic residues) spans 574–585 (QKRRSNRQVKRK). Residue Lys-611 forms a Glycyl lysine isopeptide (Lys-Gly) (interchain with G-Cter in SUMO) linkage. 2 consecutive Chromo domains span residues 644–711 (AIVD…AQMR) and 726–792 (VEVD…RVNR). Positions 825–999 (LFNWYNRQNC…FSLLHFLEPS (175 aa)) constitute a Helicase ATP-binding domain. 838–845 (DEMGLGKT) contributes to the ATP binding site. Residues 950-953 (DEAH) carry the DEAH box motif. Positions 1139–1290 (LIDKLLPKLK…KAVLQSMSGR (152 aa)) constitute a Helicase C-terminal domain. Ser-1422 and Ser-1426 each carry phosphoserine. The disordered stretch occupies residues 1694 to 1715 (EDPEYKPLQGPPKDPDDEGDPL). Residues 1791 to 2304 (IARREKQQRW…LVELEVECME (514 aa)) are interaction with FAM124B. Residues Ser-1978 and Ser-1980 each carry the phosphoserine modification. The segment at 1990-2019 (QCTSRTASPSPLRPDAPVEKSPEESTVQVP) is disordered. Thr-1995 is modified (phosphothreonine). A phosphoserine mark is found at Ser-1997, Ser-1999, and Ser-2010. Lys-2027 is covalently cross-linked (Glycyl lysine isopeptide (Lys-Gly) (interchain with G-Cter in SUMO2)). 3 positions are modified to phosphoserine: Ser-2040, Ser-2070, and Ser-2072. The interval 2045 to 2120 (VRVGSSDTAP…RSRPKLYDEE (76 aa)) is disordered. The span at 2065-2074 (EDEDDSDSEL) shows a compositional bias: acidic residues. Residues 2077-2096 (SKLSPSSSSSSSSSSSSSST) show a composition bias toward low complexity. The span at 2104-2118 (EEKLTADRSRPKLYD) shows a compositional bias: basic and acidic residues. Phosphoserine is present on residues Ser-2184, Ser-2202, and Ser-2204. The disordered stretch occupies residues 2187–2233 (VTAGGILGPGNHLLDSPSLTPGEDGDSPVPTPRSGSAASMAEEEASA). Thr-2206 bears the Phosphothreonine mark. Phosphoserine is present on Ser-2213. At Thr-2217 the chain carries Phosphothreonine. The span at 2222–2233 (SAASMAEEEASA) shows a compositional bias: low complexity. Ser-2225 bears the Phosphoserine mark. Lys-2258 is covalently cross-linked (Glycyl lysine isopeptide (Lys-Gly) (interchain with G-Cter in SUMO2)). Residues 2486–2582 (HVDSSTMLHH…NSDSSEDADD (97 aa)) form a disordered region. Positions 2493–2511 (LHHHHHHPHPHHHHHHHPG) are enriched in basic residues. Positions 2514–2529 (TTGYPSSPATTTSGTA) are enriched in low complexity. A Phosphoserine modification is found at Ser-2520. Acidic residues predominate over residues 2537 to 2551 (PEDDDEEEDEEDDDL).

It belongs to the SNF2/RAD54 helicase family. CHD8 subfamily. In terms of assembly, interacts with CTNNB1 and PIAS3. Component of some MLL1/MLL complex, at least composed of the core components KMT2A/MLL1, ASH2L, HCFC1/HCF1, WDR5 and RBBP5, as well as the facultative components BACC1, CHD8, E2F6, HSP70, INO80C, KANSL1, LAS1L, MAX, MCRS1, MGA, KAT8/MOF, PELP1, PHF20, PRP31, RING2, RUVB1/TIP49A, RUVB2/TIP49B, SENP3, TAF1, TAF4, TAF6, TAF7, TAF9 and TEX10. Interacts with CHD7. Interacts with FAM124B. Interacts with p53/TP53 and histone H1. Interacts with CTCF. Interacts with TLK2. Interacts with HNRNPL in an RNA-dependent manner. In terms of processing, sumoylated.

The protein localises to the nucleus. It carries out the reaction ATP + H2O = ADP + phosphate + H(+). Functionally, ATP-dependent chromatin-remodeling factor, it slides nucleosomes along DNA; nucleosome sliding requires ATP. Acts as a transcription repressor by remodeling chromatin structure and recruiting histone H1 to target genes. Suppresses p53/TP53-mediated apoptosis by recruiting histone H1 and preventing p53/TP53 transactivation activity. Acts as a negative regulator of Wnt signaling pathway by regulating beta-catenin (CTNNB1) activity. Negatively regulates CTNNB1-targeted gene expression by being recruited specifically to the promoter regions of several CTNNB1 responsive genes. Involved in both enhancer blocking and epigenetic remodeling at chromatin boundary via its interaction with CTCF. Acts as a suppressor of STAT3 activity by suppressing the LIF-induced STAT3 transcriptional activity. Also acts as a transcription activator via its interaction with ZNF143 by participating in efficient U6 RNA polymerase III transcription. Regulates alternative splicing of a core group of genes involved in neuronal differentiation, cell cycle and DNA repair. Enables H3K36me3-coupled transcription elongation and co-transcriptional RNA processing likely via interaction with HNRNPL. This is Chromodomain-helicase-DNA-binding protein 8 from Mus musculus (Mouse).